The chain runs to 169 residues: Probable phospholipid hydroperoxide glutathione peroxidase (169 aa).

C43 is a catalytic residue.

The protein belongs to the glutathione peroxidase family. As to quaternary structure, monomer. Has a tendency to form higher mass oligomers. Interacts with FUNDC1; this interaction promotes GPX4 recruitment into mitochondria through TOM/TIM complex where it is degraded by mitophagy.

It localises to the cytoplasm. The enzyme catalyses a hydroperoxy polyunsaturated fatty acid + 2 glutathione = a hydroxy polyunsaturated fatty acid + glutathione disulfide + H2O. Functionally, protects cells and enzymes from oxidative damage, by catalyzing the reduction of hydrogen peroxide, lipid peroxides and organic hydroperoxide, by glutathione. In Solanum lycopersicum (Tomato), this protein is Probable phospholipid hydroperoxide glutathione peroxidase (GPXle-1).